The sequence spans 539 residues: Glutamyl-tRNA(Gln) amidotransferase subunit A, mitochondrial (539 aa).

Active-site charge relay system residues include lysine 94 and serine 181. Serine 205 acts as the Acyl-ester intermediate in catalysis.

It belongs to the amidase family. GatA subfamily. Subunit of the heterotrimeric GatCAB amidotransferase (AdT) complex, composed of A, B and C subunits.

Its subcellular location is the mitochondrion. It carries out the reaction L-glutamyl-tRNA(Gln) + L-glutamine + ATP + H2O = L-glutaminyl-tRNA(Gln) + L-glutamate + ADP + phosphate + H(+). In terms of biological role, allows the formation of correctly charged Gln-tRNA(Gln) through the transamidation of misacylated Glu-tRNA(Gln) in the mitochondria. The reaction takes place in the presence of glutamine and ATP through an activated gamma-phospho-Glu-tRNA(Gln). The chain is Glutamyl-tRNA(Gln) amidotransferase subunit A, mitochondrial from Mycosarcoma maydis (Corn smut fungus).